Reading from the N-terminus, the 427-residue chain is MAP kinase-interacting serine/threonine-protein kinase 1 (427 aa).

Residues 1–11 are compositionally biased toward basic and acidic residues; that stretch reads MVSSQKLEKPI. The tract at residues 1–37 is disordered; that stretch reads MVSSQKLEKPIEMGSSEPLPIVDSDKRRKKKRKTRAT. At threonine 34 the chain carries Phosphothreonine; by PAK2. Serine 39 carries the post-translational modification Phosphoserine; by PAK2. Residues 49–333 enclose the Protein kinase domain; it reads QLTSELLGEG…AAQVLQHPWV (285 aa). Residues 55–63 and lysine 78 each bind ATP; that span reads LGEGAYAKV. Catalysis depends on aspartate 170, which acts as the Proton acceptor. 2 positions are modified to phosphoserine: serine 180 and serine 185. Phosphothreonine is present on residues threonine 209, threonine 214, and threonine 344. The segment at 407–427 is disordered; the sequence is RALAQAGRSRDANPCLTPAGL.

This sequence belongs to the protein kinase superfamily. CAMK Ser/Thr protein kinase family. Interacts with the C-terminal regions of EIF4G1 and EIF4G2. Also binds to dephosphorylated ERK1 and ERK2, and to the p38 kinases. It depends on Mg(2+) as a cofactor. Post-translationally, dual phosphorylation of Thr-209 and Thr-214 activates the kinase. Phosphorylation of Thr-344 activates the kinase. MAPK3/ERK1 is one of the kinases which activate MKNK1/MNK1. Phosphorylation by PAK2 leads to a reduced phosphorylation of EIF4G1. As to expression, ubiquitously expressed in all tissues examined, with high levels in skeletal muscle.

The enzyme catalyses L-seryl-[protein] + ATP = O-phospho-L-seryl-[protein] + ADP + H(+). The catalysed reaction is L-threonyl-[protein] + ATP = O-phospho-L-threonyl-[protein] + ADP + H(+). With respect to regulation, phosphorylated and activated by the p38 kinases and kinases in the Erk pathway. In terms of biological role, may play a role in the response to environmental stress and cytokines. Appears to regulate translation by phosphorylating EIF4E, thus increasing the affinity of this protein for the 7-methylguanosine-containing mRNA cap. This is MAP kinase-interacting serine/threonine-protein kinase 1 (Mknk1) from Mus musculus (Mouse).